We begin with the raw amino-acid sequence, 556 residues long: MSKSIEKFPKELVSPIAQLHSLVEKNSKLHIKELFAAEQDRFQNYSVKFDQLVFDYSKHRITKSVLEQLFALAKTKQLTHWIERLFSQDKVNCTEQRAAMHWALRLPSEYSKFPELTKQVHTQLQRMYALVEKIHAGQYRGATGEVIQDVVNIGVGGSDLGPQMVTHALCDFKVKTAKPLNVHFVSTMDGSQLSDLLHQLRPETTLFIISSKSFGTIDTLSNAQTVRQWLEKALGKHDRVVKSHFIGVSTKAEKMTEWGIAPENQLLLWDWVGGRYSLWSCIGFPIALTIGIDGFQQLLAGAHAVDEHFQNTSFEQNIPVLMALLGIWNNNFLNIQTHAVLPYDGRLKYFAAYLQQLEMESNGKSVQRDGQKVELDTCPIVWGEVGPNAQHAFYQLLHQGTQAVSCDFIAPIQRYNADHFTYVENAEALIEQHHLALSNCLAQSRLLAFGNEALDSAELKNLPIYKQYEGNQPSSTLLLKELNPYSLGMLIALYEHKVFVQSVIWNINPFDQWGVEKGKQIADQLLPILNGAQNDLSALDASTRGLIKILLGKVDG.

The active-site Proton donor is Glu360. Catalysis depends on residues His391 and Lys519.

It belongs to the GPI family.

The protein localises to the cytoplasm. The catalysed reaction is alpha-D-glucose 6-phosphate = beta-D-fructose 6-phosphate. The protein operates within carbohydrate biosynthesis; gluconeogenesis. It participates in carbohydrate degradation; glycolysis; D-glyceraldehyde 3-phosphate and glycerone phosphate from D-glucose: step 2/4. Functionally, catalyzes the reversible isomerization of glucose-6-phosphate to fructose-6-phosphate. This is Glucose-6-phosphate isomerase from Acinetobacter baumannii (strain ATCC 17978 / DSM 105126 / CIP 53.77 / LMG 1025 / NCDC KC755 / 5377).